Consider the following 151-residue polypeptide: UPF0208 membrane protein KPN78578_26420 (151 aa).

Transmembrane regions (helical) follow at residues 46-65 and 69-91; these read YAIR…QIAL and LGPA…WWLG.

The protein belongs to the UPF0208 family.

It is found in the cell inner membrane. This Klebsiella pneumoniae subsp. pneumoniae (strain ATCC 700721 / MGH 78578) protein is UPF0208 membrane protein KPN78578_26420.